A 286-amino-acid chain; its full sequence is Short-chain dehydrogenase fogD (286 aa).

Positions 8, 34, 55, 147, 151, 180, and 182 each coordinate NADP(+). Tyr147 functions as the Proton acceptor in the catalytic mechanism. The active-site Lowers pKa of active site Tyr is the Lys151.

It belongs to the short-chain dehydrogenases/reductases (SDR) family.

It participates in secondary metabolite biosynthesis. Functionally, short-chain dehydrogenase; part of the gene cluster that mediates the biosynthesis of flavoglaucin and congeners (including aspergin, dihydroauroglaucin and auroglaucin), prenylated salicylaldehyde derivatives carrying a saturated or an unsaturated C-7 side chain. The PKS fogA releases the carboxylic acid (8E,10E,12E)-3,5,7-trihydroxytetradeca-8,10,12-trienoic acid as its product, as well as derivatives with one and two double bonds. FogA is indeed able to reduce the initial triketide, thus being at least partially responsible for the differently saturated heptyl side chains of flavoglaucin congeners. The oxidoreductases fogB, fogC and fogD modify the nascent polyketide in fogA-bound form and, together, fogA, fogB, fogC and fogD are necessary for the formation of the aromatic core and the cyclized PKS products are released as salicyl alcohols. In particular, fogB is responsible for oxidation of a hydroxyl group or reduction of remaining double bond(s) at the C-7 residue whereas fogD is probably involved in the reductive release of the modified PKS products. The cytochrome P450 monooxygenase fogE is then responsible for the hydroxylation at C-3 of the benzene ring. The fogE products are substrates of the prenyltransferase fogH and the prenylated benzyl alcohols are subsequently oxidized by the fogF to produce the final aryl aldehydes flavoglaucin and congeners. The short-chain dehydrogenase fogG does not seem to be involved in the biosynthesis of the prenylated salicylaldehyde derivatives. The sequence is that of Short-chain dehydrogenase fogD from Aspergillus ruber (strain CBS 135680).